The primary structure comprises 150 residues: Large ribosomal subunit protein uL13 (150 aa).

Belongs to the universal ribosomal protein uL13 family. In terms of assembly, part of the 50S ribosomal subunit.

Functionally, this protein is one of the early assembly proteins of the 50S ribosomal subunit, although it is not seen to bind rRNA by itself. It is important during the early stages of 50S assembly. This Chlamydia muridarum (strain MoPn / Nigg) protein is Large ribosomal subunit protein uL13.